The following is a 121-amino-acid chain: Small ribosomal subunit protein uS13 (121 aa).

The segment at 92-121 is disordered; sequence RKGLPVRGQRTKTNARTRKGPRKSGVQLKK.

This sequence belongs to the universal ribosomal protein uS13 family. As to quaternary structure, part of the 30S ribosomal subunit. Forms a loose heterodimer with protein S19. Forms two bridges to the 50S subunit in the 70S ribosome.

Its function is as follows. Located at the top of the head of the 30S subunit, it contacts several helices of the 16S rRNA. In the 70S ribosome it contacts the 23S rRNA (bridge B1a) and protein L5 of the 50S subunit (bridge B1b), connecting the 2 subunits; these bridges are implicated in subunit movement. Contacts the tRNAs in the A and P-sites. This is Small ribosomal subunit protein uS13 from Polynucleobacter asymbioticus (strain DSM 18221 / CIP 109841 / QLW-P1DMWA-1) (Polynucleobacter necessarius subsp. asymbioticus).